A 342-amino-acid chain; its full sequence is Serpentine receptor class beta-16 (342 aa).

Residues 1-22 (MDRELIEICKENSATAFSVGYQ) are Extracellular-facing. A helical transmembrane segment spans residues 23–43 (IVYLIYVVLSVTSIFTCSYFI). Residues 44 to 61 (KTFIWNSTFHPNFKLLLT) lie on the Cytoplasmic side of the membrane. The chain crosses the membrane as a helical span at residues 62 to 82 (MYFFAAIFHSFLFTASYLMMI). At 83-102 (ERFLDYQTDCDIHVSMVPYA) the chain is on the extracellular side. A helical transmembrane segment spans residues 103–123 (IVHSSIACCLFCGMLTQVFMV). Residues 124–141 (IERLLATIKIESYEHNTS) are Cytoplasmic-facing. Residues 142-162 (FWHILAYLFFCIVLPLSLLVW) form a helical membrane-spanning segment. The Extracellular portion of the chain corresponds to 163 to 187 (AYQDADYNSPVITAISPPKGVEIRL). A helical membrane pass occupies residues 188-208 (NILYIFCFFLAILALILLQVV). Over 209 to 237 (RFVNKRRESRIEISLSGRFQIVENIDTTT) the chain is Cytoplasmic. Residues 238-258 (FISSILIINMIMSVIYIVGTF) traverse the membrane as a helical segment. Residues 259–274 (TLRNFQFDAFINNQPA) are Extracellular-facing. The chain crosses the membrane as a helical span at residues 275-295 (LATVKTIFYLHPLFSFLMPLI). Topologically, residues 296–342 (SSYHLSKMRERRVKRREHLMAIKTKGREGSDAYNQLLHDQWTQHFLK) are cytoplasmic.

Belongs to the nematode receptor-like protein srb family. As to expression, expressed throughout the nervous system, in pharyngeal muscle, hermaphrodite vulval muscles and in the male tail. Not expressed in male somatic gonads or sperm.

The protein resides in the cell membrane. It is found in the perikaryon. The protein localises to the cell projection. Its subcellular location is the dendrite. Functionally, G-protein coupled receptor. Plays a role in the navigational capacity of sperm and promotes the targeting of sperm derived from males to the fertilization site in the uterus of hermaphrodites. This chain is Serpentine receptor class beta-16, found in Caenorhabditis elegans.